Consider the following 395-residue polypeptide: Putative phosphatidate cytidylyltransferase (395 aa).

Transmembrane regions (helical) follow at residues 13–33 (STVFVVLLIVFCFFLMFSAFA), 78–98 (FAFGLVIVLFISVIAVLMNWE), 115–135 (SLLSGIMVSGGMIPTFFVIYF), 144–164 (WIWTASFAGMIVFLWAVYMIS), 177–197 (IYSLGAVICFIACIGTIYFSV), 201–221 (WTTIFLLIAIGVCTDTFAYLF), 242–262 (AFFGVTGTVLTISIICVLYSI), 306–326 (FYIYWWVSTLALIFTASIFAI), and 358–378 (FDSSSFLISFFFIYHVIAGIS).

This sequence belongs to the CDS family.

The protein localises to the cell membrane. The catalysed reaction is a 1,2-diacyl-sn-glycero-3-phosphate + CTP + H(+) = a CDP-1,2-diacyl-sn-glycerol + diphosphate. It functions in the pathway phospholipid metabolism; CDP-diacylglycerol biosynthesis; CDP-diacylglycerol from sn-glycerol 3-phosphate: step 3/3. This is Putative phosphatidate cytidylyltransferase (cdsA) from Mycoplasma pneumoniae (strain ATCC 29342 / M129 / Subtype 1) (Mycoplasmoides pneumoniae).